The chain runs to 122 residues: Large ribosomal subunit protein uL14 (122 aa).

Belongs to the universal ribosomal protein uL14 family. In terms of assembly, part of the 50S ribosomal subunit. Forms a cluster with proteins L3 and L19. In the 70S ribosome, L14 and L19 interact and together make contacts with the 16S rRNA in bridges B5 and B8.

In terms of biological role, binds to 23S rRNA. Forms part of two intersubunit bridges in the 70S ribosome. The protein is Large ribosomal subunit protein uL14 of Shewanella sediminis (strain HAW-EB3).